Consider the following 155-residue polypeptide: Ribosome maturation factor RimP (155 aa).

Belongs to the RimP family.

It localises to the cytoplasm. Its function is as follows. Required for maturation of 30S ribosomal subunits. The sequence is that of Ribosome maturation factor RimP from Exiguobacterium sibiricum (strain DSM 17290 / CCUG 55495 / CIP 109462 / JCM 13490 / 255-15).